The sequence spans 247 residues: ATP synthase subunit a, chloroplastic (247 aa).

5 helical membrane passes run 38–58 (QVLITSWFVITILLGSVIIAV), 95–115 (VPFIGTMFLFIFVSNWSGALL), 134–154 (INTTVALALLTSAAYFYAGLS), 199–219 (LVVVVLVSLVPLVVPIPVMFL), and 220–240 (GLFTSGIQALIFATLAAAYIG).

Belongs to the ATPase A chain family. In terms of assembly, F-type ATPases have 2 components, CF(1) - the catalytic core - and CF(0) - the membrane proton channel. CF(1) has five subunits: alpha(3), beta(3), gamma(1), delta(1), epsilon(1). CF(0) has four main subunits: a, b, b' and c.

Its subcellular location is the plastid. It is found in the chloroplast thylakoid membrane. Its function is as follows. Key component of the proton channel; it plays a direct role in the translocation of protons across the membrane. The protein is ATP synthase subunit a, chloroplastic of Sorghum bicolor (Sorghum).